Reading from the N-terminus, the 1226-residue chain is Cytosolic carboxypeptidase 1 (1226 aa).

Residues 599–619 (TEDDEDTESNSSVEQASVEVP) form a disordered region. The Peptidase M14 domain maps to 848 to 1138 (YPYTYSTLQM…KFCVGLLRLK (291 aa)). Zn(2+) is bound by residues H920, E923, and H1017. The active-site Proton donor/acceptor is E1102. Position 1168 is a phosphoserine (S1168). The interval 1206-1226 (YEPSAQEEVLSDSELSRTYLP) is disordered.

Belongs to the peptidase M14 family. As to quaternary structure, interacts with MYLK. Requires Zn(2+) as cofactor.

The protein localises to the cytoplasm. It is found in the cytosol. It localises to the nucleus. The protein resides in the mitochondrion. It catalyses the reaction (L-glutamyl)(n+1)-gamma-L-glutamyl-L-glutamyl-[protein] + H2O = (L-glutamyl)(n)-gamma-L-glutamyl-L-glutamyl-[protein] + L-glutamate. It carries out the reaction C-terminal L-alpha-aminoacyl-L-glutamyl-L-glutamyl-[tubulin] + H2O = C-terminal L-alpha-aminoacyl-L-glutamyl-[tubulin] + L-glutamate. Functionally, metallocarboxypeptidase that mediates protein deglutamylation of tubulin and non-tubulin target proteins. Catalyzes the removal of polyglutamate side chains present on the gamma-carboxyl group of glutamate residues within the C-terminal tail of alpha- and beta-tubulin. Specifically cleaves tubulin long-side-chains, while it is not able to remove the branching point glutamate. Also catalyzes the removal of polyglutamate residues from the carboxy-terminus of alpha-tubulin as well as non-tubulin proteins such as MYLK. Involved in KLF4 deglutamylation which promotes KLF4 proteasome-mediated degradation, thereby negatively regulating cell pluripotency maintenance and embryogenesis. The chain is Cytosolic carboxypeptidase 1 from Homo sapiens (Human).